A 357-amino-acid polypeptide reads, in one-letter code: Protein AAR2 homolog (357 aa).

Belongs to the AAR2 family.

The polypeptide is Protein AAR2 homolog (Caenorhabditis elegans).